Here is a 238-residue protein sequence, read N- to C-terminus: MGRAYELRKGRRAKRFDRMAKAFTRLGKEIVMAAKQGGGNIETNSRLRTAVNNAKSVNMPKDRIDAAIKRASGKDESDYEEVVFEGYGPYGIAILVECATDNNTRTVANVRSYFTRSGGALGKTGSLEFLFERKGVIKIDGTGLDPEELELELIDFGAEEIVKDGNEIFIYTAFVDFGTMLKELEQRNITVINAETERIPNTTTTLTTEQQEEIYKLLEKFEDDDDVQAVFHNMAETE.

It belongs to the TACO1 family.

The protein localises to the cytoplasm. The protein is Probable transcriptional regulatory protein CHU_3516 of Cytophaga hutchinsonii (strain ATCC 33406 / DSM 1761 / CIP 103989 / NBRC 15051 / NCIMB 9469 / D465).